The sequence spans 146 residues: 3-hydroxyacyl-[acyl-carrier-protein] dehydratase FabZ (146 aa).

Residue histidine 49 is part of the active site.

It belongs to the thioester dehydratase family. FabZ subfamily.

Its subcellular location is the cytoplasm. The enzyme catalyses a (3R)-hydroxyacyl-[ACP] = a (2E)-enoyl-[ACP] + H2O. In terms of biological role, involved in unsaturated fatty acids biosynthesis. Catalyzes the dehydration of short chain beta-hydroxyacyl-ACPs and long chain saturated and unsaturated beta-hydroxyacyl-ACPs. This is 3-hydroxyacyl-[acyl-carrier-protein] dehydratase FabZ from Ectopseudomonas mendocina (strain ymp) (Pseudomonas mendocina).